The primary structure comprises 206 residues: Large ribosomal subunit protein uL4 (206 aa).

The interval 47 to 77 (GTHDTKTRGEVSGGGRKPWRQKGTGRARHGS) is disordered. Over residues 63 to 77 (KPWRQKGTGRARHGS) the composition is skewed to basic residues.

Belongs to the universal ribosomal protein uL4 family. As to quaternary structure, part of the 50S ribosomal subunit.

Functionally, one of the primary rRNA binding proteins, this protein initially binds near the 5'-end of the 23S rRNA. It is important during the early stages of 50S assembly. It makes multiple contacts with different domains of the 23S rRNA in the assembled 50S subunit and ribosome. Forms part of the polypeptide exit tunnel. This is Large ribosomal subunit protein uL4 from Carboxydothermus hydrogenoformans (strain ATCC BAA-161 / DSM 6008 / Z-2901).